We begin with the raw amino-acid sequence, 309 residues long: Porphobilinogen deaminase (309 aa).

Cysteine 242 carries the S-(dipyrrolylmethanemethyl)cysteine modification.

The protein belongs to the HMBS family. As to quaternary structure, monomer. Dipyrromethane is required as a cofactor.

The catalysed reaction is 4 porphobilinogen + H2O = hydroxymethylbilane + 4 NH4(+). Its pathway is porphyrin-containing compound metabolism; protoporphyrin-IX biosynthesis; coproporphyrinogen-III from 5-aminolevulinate: step 2/4. Tetrapolymerization of the monopyrrole PBG into the hydroxymethylbilane pre-uroporphyrinogen in several discrete steps. This chain is Porphobilinogen deaminase, found in Pseudoalteromonas atlantica (strain T6c / ATCC BAA-1087).